A 184-amino-acid chain; its full sequence is GTP cyclohydrolase 1 (184 aa).

Zn(2+)-binding residues include cysteine 75, histidine 78, and cysteine 146.

The protein belongs to the GTP cyclohydrolase I family. As to quaternary structure, toroid-shaped homodecamer, composed of two pentamers of five dimers.

The catalysed reaction is GTP + H2O = 7,8-dihydroneopterin 3'-triphosphate + formate + H(+). Its pathway is cofactor biosynthesis; 7,8-dihydroneopterin triphosphate biosynthesis; 7,8-dihydroneopterin triphosphate from GTP: step 1/1. The sequence is that of GTP cyclohydrolase 1 from Chromohalobacter salexigens (strain ATCC BAA-138 / DSM 3043 / CIP 106854 / NCIMB 13768 / 1H11).